The following is a 329-amino-acid chain: DNA-directed RNA polymerase subunit alpha (329 aa).

An alpha N-terminal domain (alpha-NTD) region spans residues 1 to 232 (MQEMLEQLLT…YQLIAFVDLK (232 aa)). The segment at 246-329 (FDPIFLQPVD…PSSLVSKESA (84 aa)) is alpha C-terminal domain (alpha-CTD).

This sequence belongs to the RNA polymerase alpha chain family. As to quaternary structure, homodimer. The RNAP catalytic core consists of 2 alpha, 1 beta, 1 beta' and 1 omega subunit. When a sigma factor is associated with the core the holoenzyme is formed, which can initiate transcription.

The enzyme catalyses RNA(n) + a ribonucleoside 5'-triphosphate = RNA(n+1) + diphosphate. In terms of biological role, DNA-dependent RNA polymerase catalyzes the transcription of DNA into RNA using the four ribonucleoside triphosphates as substrates. This is DNA-directed RNA polymerase subunit alpha from Hydrogenovibrio crunogenus (strain DSM 25203 / XCL-2) (Thiomicrospira crunogena).